Reading from the N-terminus, the 365-residue chain is U-box domain-containing protein 56 (365 aa).

Residues 176-281 (YEEQRRRLEI…ELLRALEKGE (106 aa)) are a coiled coil. Residues 293–365 (EPPQCFICPI…AIKDWLQQHP (73 aa)) enclose the U-box domain.

It catalyses the reaction S-ubiquitinyl-[E2 ubiquitin-conjugating enzyme]-L-cysteine + [acceptor protein]-L-lysine = [E2 ubiquitin-conjugating enzyme]-L-cysteine + N(6)-ubiquitinyl-[acceptor protein]-L-lysine.. Its pathway is protein modification; protein ubiquitination. Its function is as follows. Functions as an E3 ubiquitin ligase. This is U-box domain-containing protein 56 (PUB56) from Arabidopsis thaliana (Mouse-ear cress).